The chain runs to 170 residues: Photosystem I assembly protein Ycf3 (170 aa).

3 TPR repeats span residues 35–68 (AFTY…EIDP), 72–105 (SYIL…NPFL), and 120–153 (GEQA…TPGN).

It belongs to the Ycf3 family.

It localises to the plastid. Its subcellular location is the chloroplast thylakoid membrane. In terms of biological role, essential for the assembly of the photosystem I (PSI) complex. May act as a chaperone-like factor to guide the assembly of the PSI subunits. This chain is Photosystem I assembly protein Ycf3, found in Triticum aestivum (Wheat).